Reading from the N-terminus, the 105-residue chain is Thioredoxin (105 aa).

Residues 1–105 form the Thioredoxin domain; sequence MASNVTDKSF…SLIEWINNNI (105 aa). Cysteine 30 and cysteine 33 form a disulfide bridge.

It belongs to the thioredoxin family.

Its function is as follows. Component of the thioredoxin-thioredoxin reductase system. Participates in various redox reactions through the reversible oxidation of its active center dithiol to a disulfide and catalyzes dithiol-disulfide exchange reactions. The chain is Thioredoxin (trxA) from Rickettsia bellii (strain RML369-C).